The sequence spans 263 residues: Transmembrane protein 176B (263 aa).

Transmembrane regions (helical) follow at residues 61 to 81, 89 to 109, 121 to 141, and 197 to 217; these read LGVT…CLYF, AFGC…GTIV, VSCL…VLGV, and LFLA…VVSV. 3 positions are modified to phosphoserine: serine 231, serine 240, and serine 253. The disordered stretch occupies residues 239–263; sequence ESERKLLDGHPAPASPAKEKIPAIL.

Belongs to the TMEM176 family. Ubiquitously expressed with higher expression in lung, liver, kidney and colon. Expressed in cerebellar granule cells.

The protein localises to the nucleus membrane. Its function is as follows. May play a role in the process of maturation of dendritic cells. Required for the development of cerebellar granule cells. This chain is Transmembrane protein 176B (Tmem176b), found in Mus musculus (Mouse).